Reading from the N-terminus, the 349-residue chain is Acyl-CoA Delta(11) desaturase (349 aa).

2 helical membrane passes run 41 to 61 (FLTF…CFTS) and 66 to 86 (TLLF…AGAH). Residues 86 to 91 (HRLWTH) carry the Histidine box-1 motif. Positions 123–127 (HRLHH) match the Histidine box-2 motif. Residues 184 to 204 (AVPLIGTVCFALPTLIPVYCW) form a helical membrane-spanning segment. Residues 263–267 (HNYHH) carry the Histidine box-3 motif. Residues 282–302 (FLNLTTLFIDFCAWFGWAYDL) traverse the membrane as a helical segment.

It belongs to the fatty acid desaturase type 1 family. It depends on Fe cation as a cofactor. Adult female pheromone gland. Increases by two or three orders of magnitude during the first 2 days after adult eclosion.

The protein resides in the endoplasmic reticulum membrane. It catalyses the reaction an 11,12-saturated fatty acyl-CoA + 2 Fe(II)-[cytochrome b5] + O2 + 2 H(+) = an (11Z)-Delta(11)-fatty acyl-CoA + 2 Fe(III)-[cytochrome b5] + 2 H2O. Its function is as follows. Catalyzes the formation of Delta(11) fatty acyl precursors in the pheromone gland. The polypeptide is Acyl-CoA Delta(11) desaturase (D11DS) (Trichoplusia ni (Cabbage looper)).